The sequence spans 876 residues: Alanine--tRNA ligase (876 aa).

Zn(2+) is bound by residues H565, H569, C667, and H671.

It belongs to the class-II aminoacyl-tRNA synthetase family. Requires Zn(2+) as cofactor.

The protein localises to the cytoplasm. It carries out the reaction tRNA(Ala) + L-alanine + ATP = L-alanyl-tRNA(Ala) + AMP + diphosphate. Functionally, catalyzes the attachment of alanine to tRNA(Ala) in a two-step reaction: alanine is first activated by ATP to form Ala-AMP and then transferred to the acceptor end of tRNA(Ala). Also edits incorrectly charged Ser-tRNA(Ala) and Gly-tRNA(Ala) via its editing domain. The chain is Alanine--tRNA ligase from Staphylococcus aureus (strain USA300).